The chain runs to 205 residues: Small ribosomal subunit protein uS4 (205 aa).

In terms of domain architecture, S4 RNA-binding spans 93 to 171 (SRVSSVLYRS…SPHYLEVDRE (79 aa)).

This sequence belongs to the universal ribosomal protein uS4 family. In terms of assembly, part of the 30S ribosomal subunit. Contacts protein S5. The interaction surface between S4 and S5 is involved in control of translational fidelity.

Functionally, one of the primary rRNA binding proteins, it binds directly to 16S rRNA where it nucleates assembly of the body of the 30S subunit. In terms of biological role, with S5 and S12 plays an important role in translational accuracy. The polypeptide is Small ribosomal subunit protein uS4 (Neorickettsia sennetsu (strain ATCC VR-367 / Miyayama) (Ehrlichia sennetsu)).